Consider the following 220-residue polypeptide: dITP/XTP pyrophosphatase (220 aa).

13 to 18 serves as a coordination point for substrate; the sequence is SHNAGK. Mg(2+) is bound by residues Asp45 and Asp74. Catalysis depends on Asp74, which acts as the Proton acceptor. Substrate contacts are provided by residues Ser75, 163–166, Lys186, and 199–200; these read FGYD and HR.

This sequence belongs to the HAM1 NTPase family. Homodimer. The cofactor is Mg(2+).

It carries out the reaction XTP + H2O = XMP + diphosphate + H(+). The catalysed reaction is dITP + H2O = dIMP + diphosphate + H(+). It catalyses the reaction ITP + H2O = IMP + diphosphate + H(+). In terms of biological role, pyrophosphatase that catalyzes the hydrolysis of nucleoside triphosphates to their monophosphate derivatives, with a high preference for the non-canonical purine nucleotides XTP (xanthosine triphosphate), dITP (deoxyinosine triphosphate) and ITP. Seems to function as a house-cleaning enzyme that removes non-canonical purine nucleotides from the nucleotide pool, thus preventing their incorporation into DNA/RNA and avoiding chromosomal lesions. This Brucella melitensis biotype 1 (strain ATCC 23456 / CCUG 17765 / NCTC 10094 / 16M) protein is dITP/XTP pyrophosphatase.